Consider the following 393-residue polypeptide: Riboflavin biosynthesis protein RibBA (393 aa).

Positions 1–200 (MEFDEIKDAL…IESLVNYQKD (200 aa)) are DHBP synthase. D-ribulose 5-phosphate-binding positions include 27 to 28 (RE), Asp32, 139 to 143 (RTGHT), and Glu163. Glu28 contributes to the Mg(2+) binding site. His142 is a binding site for Mg(2+). The interval 201 to 393 (KDTSVELKAK…TKKIKMGHLI (193 aa)) is GTP cyclohydrolase II. 249-253 (RIHSA) provides a ligand contact to GTP. Zn(2+)-binding residues include Cys254, Cys265, and Cys267. GTP-binding positions include Gln270, 291 to 293 (EGR), and Thr313. The Proton acceptor; for GTP cyclohydrolase activity role is filled by Asp325. Catalysis depends on Arg327, which acts as the Nucleophile; for GTP cyclohydrolase activity. GTP is bound by residues Ser348 and Lys353.

The protein in the N-terminal section; belongs to the DHBP synthase family. This sequence in the C-terminal section; belongs to the GTP cyclohydrolase II family. Requires Mg(2+) as cofactor. Mn(2+) is required as a cofactor. The cofactor is Zn(2+).

The catalysed reaction is D-ribulose 5-phosphate = (2S)-2-hydroxy-3-oxobutyl phosphate + formate + H(+). It catalyses the reaction GTP + 4 H2O = 2,5-diamino-6-hydroxy-4-(5-phosphoribosylamino)-pyrimidine + formate + 2 phosphate + 3 H(+). It functions in the pathway cofactor biosynthesis; riboflavin biosynthesis; 2-hydroxy-3-oxobutyl phosphate from D-ribulose 5-phosphate: step 1/1. Its pathway is cofactor biosynthesis; riboflavin biosynthesis; 5-amino-6-(D-ribitylamino)uracil from GTP: step 1/4. Its function is as follows. Catalyzes the conversion of D-ribulose 5-phosphate to formate and 3,4-dihydroxy-2-butanone 4-phosphate. Catalyzes the conversion of GTP to 2,5-diamino-6-ribosylamino-4(3H)-pyrimidinone 5'-phosphate (DARP), formate and pyrophosphate. In Staphylococcus haemolyticus (strain JCSC1435), this protein is Riboflavin biosynthesis protein RibBA.